The chain runs to 138 residues: Large ribosomal subunit protein uL16 (138 aa).

Residues 1–29 (MSLLQPRKVKWRKPQKGRTKGKATRRNQV) form a disordered region. A compositionally biased stretch (basic residues) spans 7-25 (RKVKWRKPQKGRTKGKATR).

This sequence belongs to the universal ribosomal protein uL16 family. In terms of assembly, part of the 50S ribosomal subunit.

Its function is as follows. Binds 23S rRNA and is also seen to make contacts with the A and possibly P site tRNAs. The polypeptide is Large ribosomal subunit protein uL16 (Sulfurihydrogenibium sp. (strain YO3AOP1)).